A 38-amino-acid chain; its full sequence is Potassium channel toxin alpha-KTx 3.11 (38 aa).

Disulfide bonds link C8/C28, C14/C33, and C18/C35.

It belongs to the short scorpion toxin superfamily. Potassium channel inhibitor family. Alpha-KTx 03 subfamily. Expressed by the venom gland.

Its subcellular location is the secreted. Functionally, blocks the voltage-gated potassium channel Kv1.3/KCNA3 (IC(50)=7.2 nM). Correnti and colleagues have also shown that this toxin inhibits Kv1.1/KCNA1, which is different from Abdel-Mottaleb and colleagues conclusions. The chain is Potassium channel toxin alpha-KTx 3.11 from Odontobuthus doriae (Yellow Iranian scorpion).